The primary structure comprises 403 residues: NADH-quinone oxidoreductase subunit D (403 aa).

This sequence belongs to the complex I 49 kDa subunit family. As to quaternary structure, NDH-1 is composed of 14 different subunits. Subunits NuoB, C, D, E, F, and G constitute the peripheral sector of the complex.

The protein resides in the cell inner membrane. The enzyme catalyses a quinone + NADH + 5 H(+)(in) = a quinol + NAD(+) + 4 H(+)(out). Functionally, NDH-1 shuttles electrons from NADH, via FMN and iron-sulfur (Fe-S) centers, to quinones in the respiratory chain. The immediate electron acceptor for the enzyme in this species is believed to be ubiquinone. Couples the redox reaction to proton translocation (for every two electrons transferred, four hydrogen ions are translocated across the cytoplasmic membrane), and thus conserves the redox energy in a proton gradient. The sequence is that of NADH-quinone oxidoreductase subunit D from Erythrobacter litoralis (strain HTCC2594).